The chain runs to 169 residues: Der GTPase-activating protein YihI (169 aa).

Disordered stretches follow at residues 1 to 99 (MKPS…QAEL) and 146 to 169 (SYDD…LRGN). Residues 10 to 19 (SKGHAKARRK) are compositionally biased toward basic residues. Basic and acidic residues predominate over residues 20 to 30 (TREELDQEARD). A compositionally biased stretch (basic residues) spans 31–40 (RKRQKKRRGH). Polar residues predominate over residues 49–58 (GNTTSGSKGQ). Residues 147–159 (YDDDEEEEEDEKQ) show a composition bias toward acidic residues. A compositionally biased stretch (basic and acidic residues) spans 160–169 (EDMMRLLRGN).

The protein belongs to the YihI family. In terms of assembly, interacts with Der.

In terms of biological role, a GTPase-activating protein (GAP) that modifies Der/EngA GTPase function. May play a role in ribosome biogenesis. This chain is Der GTPase-activating protein YihI, found in Escherichia coli O81 (strain ED1a).